Reading from the N-terminus, the 137-residue chain is Large ribosomal subunit protein uL16 (137 aa).

It belongs to the universal ribosomal protein uL16 family. As to quaternary structure, part of the 50S ribosomal subunit.

Binds 23S rRNA and is also seen to make contacts with the A and possibly P site tRNAs. The polypeptide is Large ribosomal subunit protein uL16 (Streptococcus pneumoniae serotype 2 (strain D39 / NCTC 7466)).